The following is a 114-amino-acid chain: UPF0342 protein LSEI_1724 (114 aa).

It belongs to the UPF0342 family.

In Lacticaseibacillus paracasei (strain ATCC 334 / BCRC 17002 / CCUG 31169 / CIP 107868 / KCTC 3260 / NRRL B-441) (Lactobacillus paracasei), this protein is UPF0342 protein LSEI_1724.